Consider the following 264-residue polypeptide: Thymidylate synthase (264 aa).

Residue Arg-21 coordinates dUMP. His-51 is a (6R)-5,10-methylene-5,6,7,8-tetrahydrofolate binding site. Position 126–127 (126–127 (RR)) interacts with dUMP. Cys-146 functions as the Nucleophile in the catalytic mechanism. DUMP contacts are provided by residues 166–169 (RSCD), Asn-177, and 207–209 (HLY). A (6R)-5,10-methylene-5,6,7,8-tetrahydrofolate-binding site is contributed by Asp-169. Ala-263 lines the (6R)-5,10-methylene-5,6,7,8-tetrahydrofolate pocket.

Belongs to the thymidylate synthase family. Bacterial-type ThyA subfamily. As to quaternary structure, homodimer.

It localises to the cytoplasm. The enzyme catalyses dUMP + (6R)-5,10-methylene-5,6,7,8-tetrahydrofolate = 7,8-dihydrofolate + dTMP. It functions in the pathway pyrimidine metabolism; dTTP biosynthesis. In terms of biological role, catalyzes the reductive methylation of 2'-deoxyuridine-5'-monophosphate (dUMP) to 2'-deoxythymidine-5'-monophosphate (dTMP) while utilizing 5,10-methylenetetrahydrofolate (mTHF) as the methyl donor and reductant in the reaction, yielding dihydrofolate (DHF) as a by-product. This enzymatic reaction provides an intracellular de novo source of dTMP, an essential precursor for DNA biosynthesis. The polypeptide is Thymidylate synthase (Shewanella baltica (strain OS155 / ATCC BAA-1091)).